Reading from the N-terminus, the 405-residue chain is Dematin (405 aa).

Disordered stretches follow at residues 1–30, 79–158, 173–192, and 203–332; these read MERLQKQPLTSPGSVSPSRDSSVPGSPSSI, PRSR…GSPQ, FPAAQPPDPNQPAKIETDYW, and TEWR…DRGN. The segment covering 11–29 has biased composition (low complexity); the sequence is SPGSVSPSRDSSVPGSPSS. Residues Ser-16, Ser-18, Ser-26, Ser-92, Ser-96, Ser-105, Ser-110, Ser-113, and Ser-156 each carry the phosphoserine modification. Residues 108-123 show a composition bias toward polar residues; it reads IISQASAPRTTGTPRT. Residues 216-227 show a composition bias toward acidic residues; that stretch reads EEEEEEEDDDSG. The segment at 224–308 is interaction with RASGRF2; sequence DDSGEEMKAL…SRLQSTEFSP (85 aa). Ser-226 is modified (phosphoserine). Basic and acidic residues-rich tracts occupy residues 228 to 242 and 252 to 261; these read EEMKALRERQREELS and ILKEEMEKSL. A phosphoserine mark is found at Ser-269, Ser-279, Ser-289, Ser-303, Ser-315, Ser-333, Ser-372, and Ser-383. Polar residues predominate over residues 276 to 322; sequence FHTSLHQGTSKSSSLPAYGRTTLSRLQSTEFSPSGSETGSPGLQNGE. One can recognise an HP domain in the interval 337-405; it reads VLEQKIYPYE…NELKKKASLF (69 aa). Ser-403 is subject to Phosphoserine; by PKA.

The protein belongs to the villin/gelsolin family. In terms of assembly, monomeric (isoform 2); under reducing conditions. Self-associates. Exists under oxidizing condition as a trimer of two isoforms 2 and isoform 1 linked by disulfide bonds. Found in a complex with DMTN, F-actin and spectrin. Found in a complex with ADD2, DMTN and SLC2A1. Interacts with F-actin, ITPKB, RASGRF2 and spectrin. Isoform 2 interacts with SLC2A1 (via C-terminus cytoplasmic region). Isoform 1 and isoform 2 interact (phosphorylated form) with plasmodium berghei 14-3-3 protein; the interaction occurs in a PKA-dependent manner. Post-translationally, phosphorylated. Phosphorylation at Ser-403 by PKA causes the C-terminal headpiece domain to associate with the N-terminal core domain, and leads to the inhibition of its actin bundling activity. In terms of processing, the N-terminus is blocked. Expressed in platelets (at protein level). Expressed in heart, brain, lung, skeletal muscle, and kidney.

It is found in the cytoplasm. The protein resides in the cytosol. The protein localises to the perinuclear region. It localises to the cytoskeleton. Its subcellular location is the cell membrane. It is found in the membrane. The protein resides in the endomembrane system. The protein localises to the cell projection. Functionally, membrane-cytoskeleton-associated protein with F-actin-binding activity that induces F-actin bundles formation and stabilization. Its F-actin-bundling activity is reversibly regulated upon its phosphorylation by the cAMP-dependent protein kinase A (PKA). Binds to the erythrocyte membrane glucose transporter-1 SLC2A1/GLUT1, and hence stabilizes and attaches the spectrin-actin network to the erythrocytic plasma membrane. Plays a role in maintaining the functional integrity of PKA-activated erythrocyte shape and the membrane mechanical properties. Also plays a role as a modulator of actin dynamics in fibroblasts; acts as a negative regulator of the RhoA activation pathway. In platelets, functions as a regulator of internal calcium mobilization across the dense tubular system that affects platelet granule secretion pathways and aggregation. Also required for the formation of a diverse set of cell protrusions, such as filopodia and lamellipodia, necessary for platelet cell spreading, motility and migration. Acts as a tumor suppressor and inhibits malignant cell transformation. This chain is Dematin (DMTN), found in Homo sapiens (Human).